Consider the following 438-residue polypeptide: Trigger factor (438 aa).

The region spanning Gly-170 to Pro-255 is the PPIase FKBP-type domain.

Belongs to the FKBP-type PPIase family. Tig subfamily.

The protein localises to the cytoplasm. The enzyme catalyses [protein]-peptidylproline (omega=180) = [protein]-peptidylproline (omega=0). Functionally, involved in protein export. Acts as a chaperone by maintaining the newly synthesized protein in an open conformation. Functions as a peptidyl-prolyl cis-trans isomerase. The chain is Trigger factor (tig) from Oenococcus oeni (Leuconostoc oenos).